We begin with the raw amino-acid sequence, 356 residues long: MPTVLALETSCDESAAAVLRLNNGCLQVIASRIASQVEKHAQWGGVVPEVASRLHVEALPHLVEEVLQEAGQSMARFDAVAATVTPGLAGALMVGSVTGRSLAALHALPFFGIHHLEGHLASVRLAEHPPRPPYLVLLVSGGHTELIRVGAESEMVRLGRSHDDAAGEAFDKVGRLLGLAYPGGPAIQALAATGDSGRFSLPKGRVSKPGGGFHPYDFSFSGLKTAMLRLVQALSEADEDLPRADLAASFEQVVADVLVERSLLCANDQGLKTVVMVGGVAANRRLRELMSKRGQEQGIEVHTAPLRYCTDNAAMIGAAALQRLVSGVNGSSLELGVAARWPLDKTEVLYHSPPPF.

Positions 115 and 119 each coordinate Fe cation. Substrate is bound by residues 138–142, Asp-171, Gly-184, and Asn-283; that span reads LVSGG. Asp-311 serves as a coordination point for Fe cation.

The protein belongs to the KAE1 / TsaD family. It depends on Fe(2+) as a cofactor.

The protein localises to the cytoplasm. The catalysed reaction is L-threonylcarbamoyladenylate + adenosine(37) in tRNA = N(6)-L-threonylcarbamoyladenosine(37) in tRNA + AMP + H(+). Its function is as follows. Required for the formation of a threonylcarbamoyl group on adenosine at position 37 (t(6)A37) in tRNAs that read codons beginning with adenine. Is involved in the transfer of the threonylcarbamoyl moiety of threonylcarbamoyl-AMP (TC-AMP) to the N6 group of A37, together with TsaE and TsaB. TsaD likely plays a direct catalytic role in this reaction. In Prochlorococcus marinus (strain MIT 9313), this protein is tRNA N6-adenosine threonylcarbamoyltransferase.